Here is a 138-residue protein sequence, read N- to C-terminus: Small ribosomal subunit protein uS8c (138 aa).

It belongs to the universal ribosomal protein uS8 family. Part of the 30S ribosomal subunit.

Its subcellular location is the plastid. It is found in the chloroplast. Functionally, one of the primary rRNA binding proteins, it binds directly to 16S rRNA central domain where it helps coordinate assembly of the platform of the 30S subunit. This chain is Small ribosomal subunit protein uS8c (rps8), found in Chlorella vulgaris (Green alga).